The sequence spans 2149 residues: Non-reducing polyketide synthase PvBS090_009107 (2149 aa).

The N-terminal acylcarrier protein transacylase domain (SAT) stretch occupies residues 8–244; it reads YLFGDQTGEF…VRVPVHAPYH (237 aa). The 432-residue stretch at 375–806 folds into the Ketosynthase family 3 (KS3) domain; that stretch reads QSKIAIIGLS…GGNTALLIED (432 aa). Residues cysteine 547, histidine 682, and histidine 724 each act as for beta-ketoacyl synthase activity in the active site. The segment at 911-1231 is malonyl-CoA:ACP transacylase (MAT) domain; sequence FVFTGQGAQY…LSAIYLAGVD (321 aa). The active-site For acyl/malonyl transferase activity is serine 1000. Positions 1290 to 1604 are product template (PT) domain; it reads TTSVQRIVET…RQVLNTVLPP (315 aa). The tract at residues 1294 to 1426 is N-terminal hotdog fold; that stretch reads QRIVETRDEG…CLVKFSDTHL (133 aa). The PKS/mFAS DH domain occupies 1294–1599; the sequence is QRIVETRDEG…FQGVPRQVLN (306 aa). The Proton acceptor; for dehydratase activity role is filled by histidine 1326. The tract at residues 1454–1599 is C-terminal hotdog fold; the sequence is SHRMHRGMFY…FQGVPRQVLN (146 aa). Residue aspartate 1512 is the Proton donor; for dehydratase activity of the active site. Residues 1604-1631 form a disordered region; sequence PAGGSKAAPRTTARAVPPPPINVEKPKS. The 78-residue stretch at 1649 to 1726 folds into the Carrier 1 domain; it reads SAGPSVLVQA…DLKQLLSQAS (78 aa). Position 1686 is an O-(pantetheine 4'-phosphoryl)serine (serine 1686). 2 stretches are compositionally biased toward low complexity: residues 1722–1731 and 1744–1755; these read LSQASPSDSS and SSSTEPSTPGTP. The segment at 1722–1763 is disordered; that stretch reads LSQASPSDSSDSSEESHYSFRDSSSTEPSTPGTPAFFSPKRG. The Carrier 2 domain occupies 1769 to 1846; sequence VGESETIKTI…AVETALDLKP (78 aa). Position 1806 is an O-(pantetheine 4'-phosphoryl)serine (serine 1806). A thioesterase (TE) domain region spans residues 1875 to 2147; that stretch reads STHPPATSIL…KLSAFIGRAM (273 aa). Residue serine 1965 is the For thioesterase activity of the active site.

It carries out the reaction 6 malonyl-CoA + acetyl-CoA + 6 H(+) = naphtopyrone YWA1 + 6 CO2 + 7 CoA + H2O. It participates in secondary metabolite biosynthesis. It functions in the pathway pigment biosynthesis. Its function is as follows. Non-reducing polyketide synthase; part of the gene cluster 24 that mediates the biosynthesis of a pigment with an aromatic structure protecting the pigmented fungus from both ionizing and non-ionizing radiations based on a mechanism similar to melanin, that is, free radical quenching and spherical spatial arrangement. Catalyzes the biosynthesis of the gamma-naphthopyrone precursor YWA1, via condensation of one acetyl-CoA starter unit with 6 malonyl-CoA units. YWA1 is probably further processed by the additional enzymes present within the cluster 24, however these additional steps have not been characterized yet. YWA1 is not converted to DHN-melanin in Byssochlamys spectabilis since the use of the DHN-melanin pathway inhibitor pyroquilon does not result in a loss of pigmentation. This chain is Non-reducing polyketide synthase PvBS090_009107, found in Byssochlamys spectabilis (Paecilomyces variotii).